A 201-amino-acid polypeptide reads, in one-letter code: MAEKFTQHTGLVVPLDAANVDTDAIIPKQFLQKVTRTGFGAHLFNDWRFLDEKGQQPNPEFVLNFPEYQGASILLARENFGCGSSREHAPWALTDYGFKVVIAPSFADIFYGNSFNNQLLPVTLSDAQVDELFALVKANPGIKFEVDLEAQVVKAGDKTYSFKIDDFRRHCMLNGLDSIGLTLQHEDAIAAYENKQPAFMR.

This sequence belongs to the LeuD family. LeuD type 1 subfamily. In terms of assembly, heterodimer of LeuC and LeuD.

The catalysed reaction is (2R,3S)-3-isopropylmalate = (2S)-2-isopropylmalate. The protein operates within amino-acid biosynthesis; L-leucine biosynthesis; L-leucine from 3-methyl-2-oxobutanoate: step 2/4. Catalyzes the isomerization between 2-isopropylmalate and 3-isopropylmalate, via the formation of 2-isopropylmaleate. The polypeptide is 3-isopropylmalate dehydratase small subunit 1 (Salmonella typhimurium (strain LT2 / SGSC1412 / ATCC 700720)).